A 119-amino-acid polypeptide reads, in one-letter code: Large ribosomal subunit protein uL18 (119 aa).

This sequence belongs to the universal ribosomal protein uL18 family. Part of the 50S ribosomal subunit; part of the 5S rRNA/L5/L18/L25 subcomplex. Contacts the 5S and 23S rRNAs.

This is one of the proteins that bind and probably mediate the attachment of the 5S RNA into the large ribosomal subunit, where it forms part of the central protuberance. The sequence is that of Large ribosomal subunit protein uL18 from Clostridium kluyveri (strain ATCC 8527 / DSM 555 / NBRC 12016 / NCIMB 10680 / K1).